The chain runs to 377 residues: tRNA-specific 2-thiouridylase MnmA (377 aa).

Residues 8–15 (GMSGGVDS) and Met-34 contribute to the ATP site. The tract at residues 94–96 (NPD) is interaction with target base in tRNA. The active-site Nucleophile is the Cys-99. Cys-99 and Cys-201 are disulfide-bonded. Gly-123 is an ATP binding site. The interval 151–153 (KDQ) is interaction with tRNA. Cys-201 functions as the Cysteine persulfide intermediate in the catalytic mechanism. Residues 315 to 316 (RY) are interaction with tRNA.

This sequence belongs to the MnmA/TRMU family.

Its subcellular location is the cytoplasm. The enzyme catalyses S-sulfanyl-L-cysteinyl-[protein] + uridine(34) in tRNA + AH2 + ATP = 2-thiouridine(34) in tRNA + L-cysteinyl-[protein] + A + AMP + diphosphate + H(+). In terms of biological role, catalyzes the 2-thiolation of uridine at the wobble position (U34) of tRNA, leading to the formation of s(2)U34. The protein is tRNA-specific 2-thiouridylase MnmA of Acinetobacter baumannii (strain SDF).